The sequence spans 438 residues: SPbeta prophage-derived uncharacterized protein YopA (438 aa).

The helical transmembrane segment at 391–411 (LHVLYLGVWYLELLTLGILGY) threads the bilayer.

The protein localises to the cell membrane. The polypeptide is SPbeta prophage-derived uncharacterized protein YopA (yopA) (Bacillus subtilis (strain 168)).